Consider the following 334-residue polypeptide: 5-formaminoimidazole-4-carboxamide-1-(beta)-D-ribofuranosyl 5'-monophosphate synthetase (334 aa).

Residues serine 10, histidine 11, serine 71, and histidine 75 each contribute to the 5-amino-1-(5-phospho-beta-D-ribosyl)imidazole-4-carboxamide site. The 248-residue stretch at 78–325 (IELVENMKVP…IAMEIREAIE (248 aa)) folds into the ATP-grasp domain. Residues 132-142 (KPHGAKGGKGY), 173-176 (QEYV), and glutamate 204 each bind ATP. 5-amino-1-(5-phospho-beta-D-ribosyl)imidazole-4-carboxamide is bound at residue asparagine 232. Positions 270 and 283 each coordinate Mg(2+).

Belongs to the phosphohexose mutase family. Homotrimer and homohexamer. It depends on Mg(2+) as a cofactor. The cofactor is Mn(2+).

The enzyme catalyses 5-amino-1-(5-phospho-beta-D-ribosyl)imidazole-4-carboxamide + formate + ATP = 5-formamido-1-(5-phospho-D-ribosyl)imidazole-4-carboxamide + ADP + phosphate. It functions in the pathway purine metabolism; IMP biosynthesis via de novo pathway; 5-formamido-1-(5-phospho-D-ribosyl)imidazole-4-carboxamide from 5-amino-1-(5-phospho-D-ribosyl)imidazole-4-carboxamide (formate route): step 1/1. Its function is as follows. Catalyzes the ATP- and formate-dependent formylation of 5-aminoimidazole-4-carboxamide-1-beta-d-ribofuranosyl 5'-monophosphate (AICAR) to 5-formaminoimidazole-4-carboxamide-1-beta-d-ribofuranosyl 5'-monophosphate (FAICAR) in the absence of folates. The chain is 5-formaminoimidazole-4-carboxamide-1-(beta)-D-ribofuranosyl 5'-monophosphate synthetase from Pyrococcus furiosus (strain ATCC 43587 / DSM 3638 / JCM 8422 / Vc1).